Consider the following 141-residue polypeptide: MAKYIAQIIVLGAQAVGRAFTKALRQEIAASQEAARRAGGGKQGDKSAESNLRTGMTLEEAKQILNIDDPKNVDAITKNYEHLFQVNERSKGGSFYIQSKVFRAKERLDHEIKAHEQPRSSNTEAAQDTAEESQSRSRQRR.

2 disordered regions span residues 34–53 (AARR…SNLR) and 108–141 (LDHE…RQRR). The tract at residues 60–113 (EAKQILNIDDPKNVDAITKNYEHLFQVNERSKGGSFYIQSKVFRAKERLDHEIK) is J-like. The segment covering 108–118 (LDHEIKAHEQP) has biased composition (basic and acidic residues).

Belongs to the TIM16/PAM16 family. As to quaternary structure, probable component of the PAM complex at least composed of a mitochondrial HSP70 protein, Roe1, TIM44, blp/TIM16 and TIM14. Associates with the TIM23 complex. Expressed in distinct cells in the embryonic and larval nervous system.

The protein localises to the mitochondrion inner membrane. Regulates ATP-dependent protein translocation into the mitochondrial matrix. Essential for larval development. This is Mitochondrial import inner membrane translocase subunit Tim16 (blp) from Drosophila melanogaster (Fruit fly).